A 130-amino-acid chain; its full sequence is Small ribosomal subunit protein uS11 (130 aa).

It belongs to the universal ribosomal protein uS11 family. As to quaternary structure, part of the 30S ribosomal subunit. Interacts with proteins S7 and S18. Binds to IF-3.

In terms of biological role, located on the platform of the 30S subunit, it bridges several disparate RNA helices of the 16S rRNA. Forms part of the Shine-Dalgarno cleft in the 70S ribosome. The sequence is that of Small ribosomal subunit protein uS11 from Bdellovibrio bacteriovorus (strain ATCC 15356 / DSM 50701 / NCIMB 9529 / HD100).